The following is a 210-amino-acid chain: Adenylate kinase (210 aa).

10–15 provides a ligand contact to ATP; that stretch reads GSGKGT. Residues 30–59 are NMP; it reads STGDLFRANISNATPLGKEIKQIVENGQLV. AMP is bound by residues T31, R36, 57-59, 85-88, and Q92; these read QLV and GFPR. The tract at residues 121-158 is LID; it reads GRRICQSCGGIFNIYTLPTKEKGICDLCKGSLYQRKDD. R122 contacts ATP. Residues C125 and C128 each contribute to the Zn(2+) site. Residue 131-132 coordinates ATP; the sequence is IF. Zn(2+) contacts are provided by C145 and C148. R155 and R166 together coordinate AMP. K194 provides a ligand contact to ATP.

The protein belongs to the adenylate kinase family. As to quaternary structure, monomer.

The protein localises to the cytoplasm. The enzyme catalyses AMP + ATP = 2 ADP. It functions in the pathway purine metabolism; AMP biosynthesis via salvage pathway; AMP from ADP: step 1/1. In terms of biological role, catalyzes the reversible transfer of the terminal phosphate group between ATP and AMP. Plays an important role in cellular energy homeostasis and in adenine nucleotide metabolism. This Borrelia turicatae (strain 91E135) protein is Adenylate kinase.